A 315-amino-acid chain; its full sequence is Calumenin (315 aa).

Positions 1–19 (MDLRQFLLCLSLCTAFALS) are cleaved as a signal peptide. Residue Y47 is modified to Phosphotyrosine. T65 carries the phosphothreonine modification. EF-hand domains are found at residues 68–103 (ESKE…AQKR), 104–139 (WIHE…YVLD), 151–186 (QMMV…DEYD), 188–223 (MKDI…HDGN), 229–264 (WVKT…SDYD), and 265–300 (HAEA…FVGS). Residue S69 is modified to Phosphoserine. Ca(2+) is bound by residues D81, D83, D85, E92, D117, N119, D121, and E128. N131 is a glycosylation site (N-linked (GlcNAc...) asparagine). Residue D164 participates in Ca(2+) binding. K165 carries the N6-acetyllysine modification. 12 residues coordinate Ca(2+): D166, D168, E175, D201, N203, D205, E212, D242, N244, D246, R248, and E253. T254 is subject to Phosphothreonine. Phosphoserine occurs at positions 261 and 277. 5 residues coordinate Ca(2+): D278, N280, D282, K284, and E289. The short motif at 312–315 (HDEF) is the Prevents secretion from ER element.

Belongs to the CREC family. Interacts with GGCX.

The protein localises to the endoplasmic reticulum membrane. It is found in the golgi apparatus. Its subcellular location is the secreted. The protein resides in the melanosome. It localises to the sarcoplasmic reticulum lumen. Functionally, involved in regulation of vitamin K-dependent carboxylation of multiple N-terminal glutamate residues. Seems to inhibit gamma-carboxylase GGCX. Binds 7 calcium ions with a low affinity. This is Calumenin (CALU) from Mesocricetus auratus (Golden hamster).